Reading from the N-terminus, the 96-residue chain is Progonadoliberin-1 (96 aa).

A signal peptide spans 1-26 (MHRKMAVKTLSVWLLLVGTLVPQHCC). Residue glutamine 27 is modified to Pyrrolidone carboxylic acid. Glycine 36 bears the Glycine amide mark.

The protein belongs to the GnRH family. As to expression, preoptic area of the brain.

The protein localises to the secreted. Stimulates the secretion of gonadotropins. The sequence is that of Progonadoliberin-1 (gnrh1) from Verasper moseri (Barfin flounder).